The sequence spans 65 residues: Large ribosomal subunit protein uL30 (65 aa).

This sequence belongs to the universal ribosomal protein uL30 family. In terms of assembly, part of the 50S ribosomal subunit.

This is Large ribosomal subunit protein uL30 from Brucella suis (strain ATCC 23445 / NCTC 10510).